Consider the following 968-residue polypeptide: uncharacterized protein (968 aa).

Residues 12–32 (LIFIFSLFFLILFFLESSIGF) traverse the membrane as a helical segment.

It to E.coli YtfN.

The protein resides in the membrane. This is an uncharacterized protein from Buchnera aphidicola subsp. Schizaphis graminum (strain Sg).